Here is a 487-residue protein sequence, read N- to C-terminus: UDP-N-acetylmuramate--L-alanine ligase (487 aa).

Residue 129 to 135 (GTHGKTT) coordinates ATP.

This sequence belongs to the MurCDEF family.

The protein resides in the cytoplasm. The catalysed reaction is UDP-N-acetyl-alpha-D-muramate + L-alanine + ATP = UDP-N-acetyl-alpha-D-muramoyl-L-alanine + ADP + phosphate + H(+). Its pathway is cell wall biogenesis; peptidoglycan biosynthesis. In terms of biological role, cell wall formation. The sequence is that of UDP-N-acetylmuramate--L-alanine ligase from Aliivibrio salmonicida (strain LFI1238) (Vibrio salmonicida (strain LFI1238)).